The primary structure comprises 414 residues: Poly(3-hydroxyalkanoate) depolymerase C (414 aa).

The N-terminal stretch at 1–37 (MLAKQIKKANSRSTLLRKSLLFAAPIILAVSSSSVYA) is a signal peptide. Catalysis depends on serine 154, which acts as the Charge relay system.

It belongs to the AB hydrolase superfamily. Lipase family.

The protein localises to the secreted. Specific for poly(hydroxyalkanoic acid) consisting of monomers of four or five carbon atoms and for P-nitrophenylbutyrate as substrates. This chain is Poly(3-hydroxyalkanoate) depolymerase C (phaZ1), found in Paucimonas lemoignei (Pseudomonas lemoignei).